We begin with the raw amino-acid sequence, 1487 residues long: MITRWLLITSFLALAILSLSSAAKKSEPEITPSSFDNEPFSLFYFEDTETILMNTRDGNLFRSFDGGKGWEQVDDPNGKMKKGVRSIWQHPFDKNRAYALGANRRHWVTKDQAKTWESFEVDGYAATQHEPLIFHGWDSSKVIFQSDECMGRFCIVKSYYSTDDFKTVSPLRVSAGGCAWAVGHPQFAEGLNLEDELRDRVLCIVPGLKVPSAHANRLVYSDDFFRSDAEGTELNIQQGRPVSGILSAAAVKKFFVTAAKSQGTNELALYVTLDTKAWHRADFGGHRVEQDGYTLLESTNYSMQVDVLTSPSSNTGILFTSNSNGTYFTRNVEHTNRDRFGHVDFEKIADIQGIVLVNTVKNWDKVGSENEKKVVSSISFDDGRTFQSLKVGDKQLHLHSVTTFANTGRVFSSPAPGLVMGVGNTGDHLKKYSEGSLYVSDDAGVTWRHALDGPFKYEFGDQGSVIMAVSDKGTTDEIQFSIDHGKEWHSTKLQHKIYPKLLTTTPDSTSLTFLLVGSEESSGTKHVVYSIDFRGLHERKCEKDDFEKWAARLNENGEPDCLMGHQQFFNRRKANADCFVDEEFKDPQPIFEPCKCSFEDFECDFNFVRSEDGKSCVPAAPLVPPVGRCQKQTDTFMGPSGWRLIPGNTCTREGGENLDKDVERPCKDVVSAPSHDKLMAQKQVFNDARQFSEQYYYLERQASSSGDDETVIMLTSEGEFWVSHDHGKNWEQPLKGVKIAAIVPHPYYSDGAFLLTRDKQAFWTVDRAYTFKSFEAPIPPNQEGLPVLSFHPQYKDWLIWTGAVDCAHGDCHSDAYFSKNRGENWDLLLRYVGKCEFESRENRPGSEKLIFCQQYENENKKNHLQLLSSENLFSDSHVHFNDAIRYATMSEYIIVASRDPDNPDSLVASVSVDGRTFARAEFPPNVDVPVKTAFTVLDSSTHAVFLHVTVSDVKGAEHGSIIKSNSNGTSYVLSLNAASRNEWGYVDFEKMQGLEGVAVVNIISNVEAVLKKGPTAKKLKTMITHNDGGQWMLLPPPAKDADGKNFGCSVKGGKGSGQCSLHLHGYTERRDPRDTFSSGSAIGLMMGIGNVGAHLSGKDEADTFMTRDGGITWKSVKKGRYMWEYGDSGSVIVIVPELRPTKVLYYSLDEGDNWEPYEFSEVEMHIYRLSTVPSDTSKNFLLWGKEVESNRLATINVDFSGLRKKSCNLVENGQESDDYYLWEPKHPFQEDNCLFGHVEQYHRKKPSSQCWNNWREPHVHSIGRNCTCTRADYECNYNYEPQNDGSCALVPGLPKPDALAVCREDPDRVEYWEPTAYRRIPQTTCAGGLILDHVVSKPCPSKEKEYEKKHGISGTGLFFAIMIPIVAAAGVGYYVYAKWDGKFGQIRLGENAGTYEGLLSRESPIVTVPIAVIAGIVAVIRALPLLAMSLWRSASGYVRLGRNRAYSRPYASRGSFAARRGDYTSVVDDEDELLGVDDAEIDEDDEL.

Residues 1 to 22 (MITRWLLITSFLALAILSLSSA) form the signal peptide. Residues 23–1356 (AKKSEPEITP…EKKHGISGTG (1334 aa)) are Lumenal-facing. One copy of the BNR 1 repeat lies at 61–71 (FRSFDGGKGWE). N-linked (GlcNAc...) asparagine glycans are attached at residues N300 and N324. 5 BNR repeats span residues 378–387 (ISFDDGRTFQ), 438–448 (YVSDDAGVTWR), 479–489 (QFSIDHGKEWH), 721–731 (WVSHDHGKNWE), and 816–826 (YFSKNRGENWD). N967 carries an N-linked (GlcNAc...) asparagine glycan. BNR repeat units follow at residues 1104–1114 (FMTRDGGITWK) and 1145–1155 (YYSLDEGDNWE). An N-linked (GlcNAc...) asparagine glycan is attached at N1265. A helical membrane pass occupies residues 1357-1377 (LFFAIMIPIVAAAGVGYYVYA). Residues 1378-1404 (KWDGKFGQIRLGENAGTYEGLLSRESP) are Cytoplasmic-facing. Residues 1405–1425 (IVTVPIAVIAGIVAVIRALPL) form a helical membrane-spanning segment. At 1426-1487 (LAMSLWRSAS…DAEIDEDDEL (62 aa)) the chain is on the lumenal side.

The protein belongs to the VPS10-related sortilin family.

Its subcellular location is the golgi apparatus. It is found in the trans-Golgi network membrane. The protein localises to the prevacuolar compartment membrane. Functionally, functions as a sorting receptor in the Golgi compartment required for the intracellular sorting and delivery of soluble vacuolar proteins, like carboxypeptidase Y (CPY) and proteinase A. Executes multiple rounds of sorting by cycling between the late Golgi and a prevacuolar endosome-like compartment. This is Vacuolar protein sorting/targeting protein 10 (vps10) from Neosartorya fischeri (strain ATCC 1020 / DSM 3700 / CBS 544.65 / FGSC A1164 / JCM 1740 / NRRL 181 / WB 181) (Aspergillus fischerianus).